We begin with the raw amino-acid sequence, 132 residues long: MDSRTGENITAHQAENSVFIWEVPNPLYFKIMRVEDPAYTRTRIYHIQIRFNHNLRKALDLHKAFLNFQVWTTSIQASGTTYLNRFRLLVLLYLHRLGVIGINNVIRAVQFATNKSYVNTVLENHDIKYKFY.

It belongs to the geminiviridae replication enhancer protein family. Homooligomer. Interacts with the replication-associated protein (REP). Interacts with host proliferating cell nuclear antigen (PCNA). Interacts with host retinoblastoma-related protein 1 (RBR1), and may thereby deregulate the host cell cycle. Oligomerization and interaction with PCNA are necessary for optimal replication enhancement.

In terms of biological role, increases viral DNA accumulation. Enhances infectivity and symptom expression. This chain is Replication enhancer protein, found in Macroptilium lathyroides (Lima bean).